A 120-amino-acid polypeptide reads, in one-letter code: NAD(P)H-quinone oxidoreductase subunit 3, chloroplastic (120 aa).

The next 3 helical transmembrane spans lie at 9 to 29 (FFWA…FISG), 64 to 84 (MFAL…PWAM), and 88 to 108 (VLGV…IIGL).

Belongs to the complex I subunit 3 family. In terms of assembly, NDH is composed of at least 16 different subunits, 5 of which are encoded in the nucleus.

The protein localises to the plastid. It is found in the chloroplast thylakoid membrane. It carries out the reaction a plastoquinone + NADH + (n+1) H(+)(in) = a plastoquinol + NAD(+) + n H(+)(out). It catalyses the reaction a plastoquinone + NADPH + (n+1) H(+)(in) = a plastoquinol + NADP(+) + n H(+)(out). NDH shuttles electrons from NAD(P)H:plastoquinone, via FMN and iron-sulfur (Fe-S) centers, to quinones in the photosynthetic chain and possibly in a chloroplast respiratory chain. The immediate electron acceptor for the enzyme in this species is believed to be plastoquinone. Couples the redox reaction to proton translocation, and thus conserves the redox energy in a proton gradient. This Atropa belladonna (Belladonna) protein is NAD(P)H-quinone oxidoreductase subunit 3, chloroplastic.